The primary structure comprises 905 residues: DNA mismatch repair protein MutS (905 aa).

The segment at 389-410 is disordered; that stretch reads ERPANPEGTYPTDAETSGDTLP. 638-645 provides a ligand contact to ATP; sequence GPNMAGKS. The segment at 826–847 is disordered; it reads RDAARGTNSAPSRQTLPGLDLP. A compositionally biased stretch (polar residues) spans 831 to 840; that stretch reads GTNSAPSRQT.

The protein belongs to the DNA mismatch repair MutS family.

In terms of biological role, this protein is involved in the repair of mismatches in DNA. It is possible that it carries out the mismatch recognition step. This protein has a weak ATPase activity. The protein is DNA mismatch repair protein MutS of Nitratidesulfovibrio vulgaris (strain ATCC 29579 / DSM 644 / CCUG 34227 / NCIMB 8303 / VKM B-1760 / Hildenborough) (Desulfovibrio vulgaris).